Here is a 453-residue protein sequence, read N- to C-terminus: Bifunctional protein GlmU (453 aa).

A pyrophosphorylase region spans residues 1 to 226 (MFAIAILAAG…IDEVSGVNDR (226 aa)). UDP-N-acetyl-alpha-D-glucosamine-binding positions include 7–10 (LAAG), Lys-21, Gln-73, and 78–79 (GT). Asp-103 contributes to the Mg(2+) binding site. Positions 140, 155, 170, and 224 each coordinate UDP-N-acetyl-alpha-D-glucosamine. Asn-224 is a binding site for Mg(2+). The interval 227-247 (AQLANCENLIQQSLRNHWMSK) is linker. Positions 248 to 453 (GVSFIDPESC…NWKTREETNQ (206 aa)) are N-acetyltransferase. Residues Arg-329 and Lys-347 each coordinate UDP-N-acetyl-alpha-D-glucosamine. Catalysis depends on His-359, which acts as the Proton acceptor. Residues Tyr-362 and Asn-373 each coordinate UDP-N-acetyl-alpha-D-glucosamine. Acetyl-CoA is bound by residues Ala-376, Ala-419, and Arg-436.

The protein in the N-terminal section; belongs to the N-acetylglucosamine-1-phosphate uridyltransferase family. This sequence in the C-terminal section; belongs to the transferase hexapeptide repeat family. As to quaternary structure, homotrimer. Mg(2+) serves as cofactor.

It is found in the cytoplasm. The enzyme catalyses alpha-D-glucosamine 1-phosphate + acetyl-CoA = N-acetyl-alpha-D-glucosamine 1-phosphate + CoA + H(+). It catalyses the reaction N-acetyl-alpha-D-glucosamine 1-phosphate + UTP + H(+) = UDP-N-acetyl-alpha-D-glucosamine + diphosphate. The protein operates within nucleotide-sugar biosynthesis; UDP-N-acetyl-alpha-D-glucosamine biosynthesis; N-acetyl-alpha-D-glucosamine 1-phosphate from alpha-D-glucosamine 6-phosphate (route II): step 2/2. Its pathway is nucleotide-sugar biosynthesis; UDP-N-acetyl-alpha-D-glucosamine biosynthesis; UDP-N-acetyl-alpha-D-glucosamine from N-acetyl-alpha-D-glucosamine 1-phosphate: step 1/1. It functions in the pathway bacterial outer membrane biogenesis; LPS lipid A biosynthesis. Its function is as follows. Catalyzes the last two sequential reactions in the de novo biosynthetic pathway for UDP-N-acetylglucosamine (UDP-GlcNAc). The C-terminal domain catalyzes the transfer of acetyl group from acetyl coenzyme A to glucosamine-1-phosphate (GlcN-1-P) to produce N-acetylglucosamine-1-phosphate (GlcNAc-1-P), which is converted into UDP-GlcNAc by the transfer of uridine 5-monophosphate (from uridine 5-triphosphate), a reaction catalyzed by the N-terminal domain. The polypeptide is Bifunctional protein GlmU (Prochlorococcus marinus (strain MIT 9211)).